A 967-amino-acid chain; its full sequence is Cytosolic carboxypeptidase 2 (967 aa).

The Peptidase M14 domain occupies Y330–C601. Residues H396, E399, and H492 each coordinate Zn(2+). The active-site Proton donor/acceptor is the E565. 2 disordered regions span residues K679 to A706 and P944 to K967. Positions I946–K967 are enriched in polar residues.

This sequence belongs to the peptidase M14 family. Requires Zn(2+) as cofactor.

It is found in the cytoplasm. The protein localises to the cytosol. Its subcellular location is the cytoskeleton. The protein resides in the microtubule organizing center. It localises to the centrosome. It is found in the centriole. The protein localises to the cilium basal body. The catalysed reaction is (L-glutamyl)(n+1)-gamma-L-glutamyl-L-glutamyl-[protein] + H2O = (L-glutamyl)(n)-gamma-L-glutamyl-L-glutamyl-[protein] + L-glutamate. Its function is as follows. Metallocarboxypeptidase that mediates deglutamylation of target proteins. Catalyzes the deglutamylation of polyglutamate side chains generated by post-translational polyglutamylation in proteins such as tubulins. Also removes gene-encoded polyglutamates from the carboxy-terminus of target proteins such as MYLK. Does not show detyrosinase or deglycylase activities from the carboxy-terminus of tubulin. In terms of biological role, metallocarboxypeptidase that mediates deglutamylation of tubulin and non-tubulin target proteins. Catalyzes the removal of polyglutamate side chains present on the gamma-carboxyl group of glutamate residues within the C-terminal tail of tubulin protein. Specifically cleaves tubulin long-side-chains, while it is not able to remove the branching point glutamate. Also catalyzes the removal of polyglutamate residues from the carboxy-terminus of non-tubulin proteins. The polypeptide is Cytosolic carboxypeptidase 2 (agbl2) (Xenopus tropicalis (Western clawed frog)).